A 245-amino-acid chain; its full sequence is tRNA (guanine-N(1)-)-methyltransferase (245 aa).

G114 contacts S-adenosyl-L-methionine.

It belongs to the RNA methyltransferase TrmD family. Homodimer.

The protein resides in the cytoplasm. The enzyme catalyses guanosine(37) in tRNA + S-adenosyl-L-methionine = N(1)-methylguanosine(37) in tRNA + S-adenosyl-L-homocysteine + H(+). In terms of biological role, specifically methylates guanosine-37 in various tRNAs. The sequence is that of tRNA (guanine-N(1)-)-methyltransferase from Sphingopyxis alaskensis (strain DSM 13593 / LMG 18877 / RB2256) (Sphingomonas alaskensis).